A 210-amino-acid polypeptide reads, in one-letter code: Guanylate kinase (210 aa).

In terms of domain architecture, Guanylate kinase-like spans 6–186 (GLLGIISAPS…ALIYLQSVIL (181 aa)). 13–20 (APSGAGKS) is an ATP binding site.

It belongs to the guanylate kinase family.

The protein resides in the cytoplasm. The catalysed reaction is GMP + ATP = GDP + ADP. Functionally, essential for recycling GMP and indirectly, cGMP. In Blochmanniella floridana, this protein is Guanylate kinase.